A 349-amino-acid polypeptide reads, in one-letter code: 4-hydroxy-3-methylbut-2-en-1-yl diphosphate synthase (flavodoxin) (349 aa).

[4Fe-4S] cluster-binding residues include C264, C267, C299, and E306.

Belongs to the IspG family. [4Fe-4S] cluster is required as a cofactor.

The enzyme catalyses (2E)-4-hydroxy-3-methylbut-2-enyl diphosphate + oxidized [flavodoxin] + H2O + 2 H(+) = 2-C-methyl-D-erythritol 2,4-cyclic diphosphate + reduced [flavodoxin]. The protein operates within isoprenoid biosynthesis; isopentenyl diphosphate biosynthesis via DXP pathway; isopentenyl diphosphate from 1-deoxy-D-xylulose 5-phosphate: step 5/6. Converts 2C-methyl-D-erythritol 2,4-cyclodiphosphate (ME-2,4cPP) into 1-hydroxy-2-methyl-2-(E)-butenyl 4-diphosphate. This Clostridium acetobutylicum (strain ATCC 824 / DSM 792 / JCM 1419 / IAM 19013 / LMG 5710 / NBRC 13948 / NRRL B-527 / VKM B-1787 / 2291 / W) protein is 4-hydroxy-3-methylbut-2-en-1-yl diphosphate synthase (flavodoxin).